The chain runs to 329 residues: DNA repair and recombination protein RadA (329 aa).

107 to 114 serves as a coordination point for ATP; sequence GEFGSGKS.

The protein belongs to the eukaryotic RecA-like protein family.

In terms of biological role, involved in DNA repair and in homologous recombination. Binds and assemble on single-stranded DNA to form a nucleoprotein filament. Hydrolyzes ATP in a ssDNA-dependent manner and promotes DNA strand exchange between homologous DNA molecules. This is DNA repair and recombination protein RadA from Methanocorpusculum labreanum (strain ATCC 43576 / DSM 4855 / Z).